The primary structure comprises 455 residues: Bifunctional protein GlmU (455 aa).

The segment at 1 to 228 (MTQPLHVIIL…AQEAEGANDP (228 aa)) is pyrophosphorylase. Residues 10–13 (LAAG), lysine 24, glutamine 76, 81–82 (GT), 103–105 (YGD), glycine 138, glutamate 153, asparagine 168, and asparagine 226 contribute to the UDP-N-acetyl-alpha-D-glucosamine site. Aspartate 105 provides a ligand contact to Mg(2+). Residue asparagine 226 participates in Mg(2+) binding. Residues 229–249 (WQLSQLERAWQRRAVRALCAQ) form a linker region. The interval 250 to 455 (GARVRDPARL…DGWKRPLKKS (206 aa)) is N-acetyltransferase. UDP-N-acetyl-alpha-D-glucosamine contacts are provided by arginine 332 and lysine 350. Catalysis depends on histidine 362, which acts as the Proton acceptor. Positions 365 and 376 each coordinate UDP-N-acetyl-alpha-D-glucosamine. Acetyl-CoA is bound by residues alanine 379, 385-386 (NY), serine 404, alanine 422, and arginine 439.

It in the N-terminal section; belongs to the N-acetylglucosamine-1-phosphate uridyltransferase family. In the C-terminal section; belongs to the transferase hexapeptide repeat family. As to quaternary structure, homotrimer. Requires Mg(2+) as cofactor.

The protein localises to the cytoplasm. The enzyme catalyses alpha-D-glucosamine 1-phosphate + acetyl-CoA = N-acetyl-alpha-D-glucosamine 1-phosphate + CoA + H(+). It carries out the reaction N-acetyl-alpha-D-glucosamine 1-phosphate + UTP + H(+) = UDP-N-acetyl-alpha-D-glucosamine + diphosphate. The protein operates within nucleotide-sugar biosynthesis; UDP-N-acetyl-alpha-D-glucosamine biosynthesis; N-acetyl-alpha-D-glucosamine 1-phosphate from alpha-D-glucosamine 6-phosphate (route II): step 2/2. Its pathway is nucleotide-sugar biosynthesis; UDP-N-acetyl-alpha-D-glucosamine biosynthesis; UDP-N-acetyl-alpha-D-glucosamine from N-acetyl-alpha-D-glucosamine 1-phosphate: step 1/1. It functions in the pathway bacterial outer membrane biogenesis; LPS lipid A biosynthesis. Its function is as follows. Catalyzes the last two sequential reactions in the de novo biosynthetic pathway for UDP-N-acetylglucosamine (UDP-GlcNAc). The C-terminal domain catalyzes the transfer of acetyl group from acetyl coenzyme A to glucosamine-1-phosphate (GlcN-1-P) to produce N-acetylglucosamine-1-phosphate (GlcNAc-1-P), which is converted into UDP-GlcNAc by the transfer of uridine 5-monophosphate (from uridine 5-triphosphate), a reaction catalyzed by the N-terminal domain. The chain is Bifunctional protein GlmU from Stenotrophomonas maltophilia (strain R551-3).